The sequence spans 184 residues: Chaperone protein YcdY (184 aa).

This sequence belongs to the TorD/DmsD family. In terms of assembly, interacts with YcdX.

Its function is as follows. Acts as a chaperone that increases YcdX activity, maybe by facilitating the correct insertion of the zinc ions into the catalytic site of YcdX. Involved in the swarming motility process. This chain is Chaperone protein YcdY (ycdY), found in Escherichia coli (strain K12).